The chain runs to 411 residues: MNSPPKVSVLITVTGVDQPGVTATLFEVLSGHGVELLNVEQVVIRHRLTLGVLVCCPADVADGPALRHDVEAAIRKVGLDVSIERSDDVPIIREPSTHTIFVLGRPITAAAFGAVAREVAALGVNIDLIRGVSDYPVIGLELRVSVPPGADGALRTALNRVSSEEHVDVAVEDYTLERRAKRLIVFDVDSTLVQGEVIEMLAAKAGAEGQVAAITDAAMRGELDFAQSLQQRVATLAGLPATVIDEVAGQLELMPGARTTLRTLRRLGYACGVVSGGFRRIIEPLAEELMLDYVAANELEIVDGTLTGRVVGPIIDRAGKATALREFAQRAGVPMAQTVAVGDGANDIDMLAAAGLGIAFNAKPALREVADASLSHPYLDTVLFLLGVTRGEIEAADAIDGEVRRVEIPPE.

Residues 10–88 (LITVTGVDQP…LDVSIERSDD (79 aa)) enclose the ACT domain. Residue aspartate 187 is the Nucleophile of the active site. Residues aspartate 187 and aspartate 189 each coordinate Mg(2+). Aspartate 189 serves as the catalytic Proton donor. Substrate is bound by residues glutamate 196, arginine 232, 275–276 (SG), and lysine 320. Mg(2+) is bound at residue aspartate 343. A substrate-binding site is contributed by asparagine 346.

Belongs to the HAD-like hydrolase superfamily. SerB family. Homodimer. It depends on Mg(2+) as a cofactor.

The enzyme catalyses O-phospho-L-serine + H2O = L-serine + phosphate. It carries out the reaction O-phospho-D-serine + H2O = D-serine + phosphate. The protein operates within amino-acid biosynthesis; L-serine biosynthesis; L-serine from 3-phospho-D-glycerate: step 3/3. In terms of biological role, catalyzes the dephosphorylation of phosphoserine (P-Ser). In Mycobacterium avium (strain 104), this protein is Phosphoserine phosphatase (serB).